Consider the following 147-residue polypeptide: uncharacterized protein (147 aa).

The helical transmembrane segment at Ala-3 to Ser-23 threads the bilayer.

It to M.tuberculosis Rv1312.

The protein resides in the membrane. This is an uncharacterized protein from Mycobacterium leprae (strain TN).